Here is a 314-residue protein sequence, read N- to C-terminus: CBASS oligonucleotide cyclase CdnC (314 aa).

An ATP-binding site is contributed by K60. Residues D73 and D75 each coordinate Mg(2+). ATP is bound by residues D75, K186, 197–199, and N263; that span reads KSF.

Belongs to the CD-NTase family. C01 subfamily. Forms complexes with Cap7 with 1:1 and 2:2 stoichimetry, and a 1:1:6 CdnC:Cap7:Cap6 complex. Mg(2+) is required as a cofactor.

Cyclic nucleotide synthase (second messenger synthase) of a CBASS antivirus system. CBASS (cyclic oligonucleotide-based antiphage signaling system) provides immunity against bacteriophage. The CD-NTase protein synthesizes cyclic nucleotides in response to infection; these serve as specific second messenger signals. The signals activate a diverse range of effectors, leading to bacterial cell death and thus abortive phage infection. A type III CBASS system. Expression of this CBASS system (Cap18-Cap6-Cap7-CdnC-CapW-Cap17) in a susceptible E.coli (strain MG1655) confers resistance to bacteriophage P1. Probable cyclic nucleotide synthase that upon activation catalyzes the synthesis of a cyclic nucleotide. A cyclase activity for this enzyme was not identified in. The protein is CBASS oligonucleotide cyclase CdnC of Escherichia coli (strain KTE188).